A 216-amino-acid polypeptide reads, in one-letter code: Probable RNA 2'-phosphotransferase 1 (216 aa).

The protein belongs to the KptA/TPT1 family.

Its function is as follows. Removes the 2'-phosphate from RNA via an intermediate in which the phosphate is ADP-ribosylated by NAD followed by a presumed transesterification to release the RNA and generate ADP-ribose 1''-2''-cyclic phosphate (APPR&gt;P). May function as an ADP-ribosylase. This Archaeoglobus fulgidus (strain ATCC 49558 / DSM 4304 / JCM 9628 / NBRC 100126 / VC-16) protein is Probable RNA 2'-phosphotransferase 1 (kptA1).